A 522-amino-acid chain; its full sequence is Pectinesterase/pectinesterase inhibitor PPE8B (522 aa).

The first 30 residues, 1 to 30, serve as a signal peptide directing secretion; that stretch reads MPYLLMASHNPLPAGKQLLLLVLLCAFFSS. The pectinesterase inhibitor PPE8B stretch occupies residues 31–174; it reads SFIPFASCSI…TSLVQELLTQ (144 aa). Residues Asn-105, Asn-118, Asn-119, Asn-218, Asn-221, and Asn-274 are each glycosylated (N-linked (GlcNAc...) asparagine). The pectinesterase PPE8B stretch occupies residues 208 to 506; that stretch reads DAIVAQDGTG…YTVAQFIEGN (299 aa). Substrate-binding residues include Thr-283 and Gln-313. Catalysis depends on Asp-336, which acts as the Proton donor; for pectinesterase activity. The cysteines at positions 350 and 370 are disulfide-linked. Residue Asp-357 is the Nucleophile; for pectinesterase activity of the active site. An N-linked (GlcNAc...) asparagine glycan is attached at Asn-405. 2 residues coordinate substrate: Arg-426 and Trp-428. 2 N-linked (GlcNAc...) asparagine glycosylation sites follow: Asn-489 and Asn-496.

In the N-terminal section; belongs to the PMEI family. The protein in the C-terminal section; belongs to the pectinesterase family.

The protein localises to the secreted. Its subcellular location is the cell wall. The enzyme catalyses [(1-&gt;4)-alpha-D-galacturonosyl methyl ester](n) + n H2O = [(1-&gt;4)-alpha-D-galacturonosyl](n) + n methanol + n H(+). It participates in glycan metabolism; pectin degradation; 2-dehydro-3-deoxy-D-gluconate from pectin: step 1/5. Functionally, may have roles in the deposition of pectin in developing tissues and in the wall loosening and cell separation that occurs in cell expansion, fruit ripening and abscission. This Prunus persica (Peach) protein is Pectinesterase/pectinesterase inhibitor PPE8B.